Here is a 446-residue protein sequence, read N- to C-terminus: Minor fimbrium tip subunit Mfa3 (446 aa).

The first 20 residues, 1–20, serve as a signal peptide directing secretion; sequence MMQLKKRYFALILLLFLWSG. Residue Cys21 is the site of N-palmitoyl cysteine attachment. A lipid anchor (S-diacylglycerol cysteine) is attached at Cys21. A propeptide spanning residues 21–43 is cleaved from the precursor; sequence CDRGVDPQPDPLQPDVYLLVNAR.

The protein belongs to the bacteroidetes fimbrillin superfamily. FimB/Mfa2 family. In terms of assembly, component of the fimbrium tip. Minor fimbriae are composed of a structural subunit, most often Mfa1, and the accessory subunits Mfa3, Mfa4 and Mfa5. Fimbrium assembly occurs by linear, head-to-tail oligomerization of fimbrial subunits. This is mediated via insertion of a C-terminal beta-strand from one subunit into a groove in the N-terminal domain of the following subunit. Mfa3 is required for Mfa4 and Mfa5 insertion into the fimbrium.

It is found in the fimbrium. The protein resides in the cell outer membrane. In terms of biological role, tip subunit of the minor fimbriae. These filamentous pili are attached to the cell surface; they mediate biofilm formation, adhesion onto host cells and onto other bacteria that are part of the oral microbiome. They play an important role in invasion of periodontal tissues and are recognized as major virulence factors. Fimbrium subunits from different strains have highly divergent sequences, and this correlates with pathogenicity. This Porphyromonas gingivalis (strain ATCC 33277 / DSM 20709 / CIP 103683 / JCM 12257 / NCTC 11834 / 2561) protein is Minor fimbrium tip subunit Mfa3 (mfa3).